The chain runs to 621 residues: tRNA uridine 5-carboxymethylaminomethyl modification enzyme MnmG (621 aa).

9-14 (GGGHAG) contributes to the FAD binding site. 270–284 (GPRYCPSIEDKIVKF) is an NAD(+) binding site.

Belongs to the MnmG family. Homodimer. Heterotetramer of two MnmE and two MnmG subunits. FAD serves as cofactor.

The protein localises to the cytoplasm. NAD-binding protein involved in the addition of a carboxymethylaminomethyl (cmnm) group at the wobble position (U34) of certain tRNAs, forming tRNA-cmnm(5)s(2)U34. This chain is tRNA uridine 5-carboxymethylaminomethyl modification enzyme MnmG, found in Borreliella afzelii (strain PKo) (Borrelia afzelii).